A 373-amino-acid chain; its full sequence is tRNA (guanine(26)-N(2))-dimethyltransferase (373 aa).

Residues 2 to 365 (KIISEGETKL…AELSDLVVLI (364 aa)) enclose the Trm1 methyltransferase domain. S-adenosyl-L-methionine is bound by residues Arg35, Arg66, Asp86, Asp113, and Ala114.

It belongs to the class I-like SAM-binding methyltransferase superfamily. Trm1 family.

The catalysed reaction is guanosine(26) in tRNA + 2 S-adenosyl-L-methionine = N(2)-dimethylguanosine(26) in tRNA + 2 S-adenosyl-L-homocysteine + 2 H(+). Dimethylates a single guanine residue at position 26 of a number of tRNAs using S-adenosyl-L-methionine as donor of the methyl groups. The protein is tRNA (guanine(26)-N(2))-dimethyltransferase of Methanococcus maripaludis (strain C7 / ATCC BAA-1331).